Reading from the N-terminus, the 31-residue chain is Glucagon-5 (31 aa).

It belongs to the glucagon family.

It localises to the secreted. Glucagon plays a key role in glucose metabolism and homeostasis. Regulates blood glucose by increasing gluconeogenesis and decreasing glycolysis. The sequence is that of Glucagon-5 from Huso dauricus (Kaluga sturgeon).